A 423-amino-acid polypeptide reads, in one-letter code: Carboxypeptidase S1 (423 aa).

4 disulfide bridges follow: Cys8–Cys68, Cys55–Cys300, Cys223–Cys246, and Cys230–Cys239. The active site involves Ser143. Asn200 carries an N-linked (GlcNAc...) asparagine glycan. The active site involves Asp340. Cys343 contacts substrate. His397 is a catalytic residue. Glu398 contributes to the substrate binding site.

It belongs to the peptidase S10 family.

The catalysed reaction is Preferential release of a C-terminal arginine or lysine residue.. This chain is Carboxypeptidase S1, found in Penicillium janthinellum (Penicillium vitale).